Consider the following 1445-residue polypeptide: DNA-directed RNA polymerase subunit beta'' (1445 aa).

Residues Cys-220, Cys-293, Cys-300, and Cys-303 each contribute to the Zn(2+) site.

It belongs to the RNA polymerase beta' chain family. RpoC2 subfamily. In terms of assembly, in plastids the minimal PEP RNA polymerase catalytic core is composed of four subunits: alpha, beta, beta', and beta''. When a (nuclear-encoded) sigma factor is associated with the core the holoenzyme is formed, which can initiate transcription. The cofactor is Zn(2+).

The protein resides in the plastid. Its subcellular location is the chloroplast. It carries out the reaction RNA(n) + a ribonucleoside 5'-triphosphate = RNA(n+1) + diphosphate. Its function is as follows. DNA-dependent RNA polymerase catalyzes the transcription of DNA into RNA using the four ribonucleoside triphosphates as substrates. The polypeptide is DNA-directed RNA polymerase subunit beta'' (Anthoceros angustus (Hornwort)).